Here is a 106-residue protein sequence, read N- to C-terminus: UPF0060 membrane protein CHU_3331 (106 aa).

The next 4 membrane-spanning stretches (helical) occupy residues 5–25 (FYFI…WLHF), 31–51 (ALLL…LTKI), 59–79 (AYAV…YGIE), and 85–105 (IWDY…LFAP).

It belongs to the UPF0060 family.

It is found in the cell inner membrane. This is UPF0060 membrane protein CHU_3331 from Cytophaga hutchinsonii (strain ATCC 33406 / DSM 1761 / CIP 103989 / NBRC 15051 / NCIMB 9469 / D465).